Here is a 269-residue protein sequence, read N- to C-terminus: MAVVTTKQLLESGVYFGHATRKWNPKMKPYIFTSRNGIHIINLKKTSEEIEKAYQELLNIITSGGKALFLGTKKQIQSSIREEAQRSQQYYVDHRWLGGTLTNFKTILKRIELLHLLHKQEEEGLWKKLPKKEVVKLKRKRDKLEKFLGGIKDMKNLPQAIFIFDPEKESIAVAEARKLGIKVFGIVDTNCDPDLVDYIIPANDDAIRGVKLIIWLMANACVQGNGGVAEKAETFDAKNPLKPQNYNTLNKRPYQDSPRKPSYQNQNQR.

The tract at residues 235-269 is disordered; that stretch reads FDAKNPLKPQNYNTLNKRPYQDSPRKPSYQNQNQR.

This sequence belongs to the universal ribosomal protein uS2 family.

The polypeptide is Small ribosomal subunit protein uS2 (Aster yellows witches'-broom phytoplasma (strain AYWB)).